Consider the following 633-residue polypeptide: Protein BZZ1 (633 aa).

In terms of domain architecture, F-BAR spans 5 to 271 (LSIGNEIKDS…VVKQNKPSLN (267 aa)). A coiled-coil region spans residues 138 to 210 (DMVNKKDNIY…INQANRTKDK (73 aa)). Phosphoserine is present on residues Ser327, Ser463, Ser472, and Ser476. Residues 429-495 (VDSKPSSGGS…KKTTQNSSDD (67 aa)) form a disordered region. Positions 474–493 (NNSIRTTSTNNTKKTTQNSS) are enriched in low complexity. SH3 domains are found at residues 493-555 (SDDG…ISSA) and 577-633 (LPVR…SYCK).

It belongs to the BZZ1 family. Interacts with LAS17 and MYO5.

It is found in the cytoplasm. The protein localises to the cytoskeleton. Its subcellular location is the actin patch. Functionally, plays a role in endocytosis and trafficking to the vacuole. Functions with type I myosins to restore polarity of the actin cytoskeleton after NaCl stress. This chain is Protein BZZ1 (BZZ1), found in Saccharomyces cerevisiae (strain ATCC 204508 / S288c) (Baker's yeast).